A 291-amino-acid polypeptide reads, in one-letter code: tRNA U34 carboxymethyltransferase (291 aa).

Residues Lys61, Trp75, Lys80, Gly100, 122-124 (DPS), 149-150 (VE), Tyr169, and Arg284 contribute to the carboxy-S-adenosyl-L-methionine site.

This sequence belongs to the class I-like SAM-binding methyltransferase superfamily. CmoB family. As to quaternary structure, homotetramer.

It catalyses the reaction carboxy-S-adenosyl-L-methionine + 5-hydroxyuridine(34) in tRNA = 5-carboxymethoxyuridine(34) in tRNA + S-adenosyl-L-homocysteine + H(+). Functionally, catalyzes carboxymethyl transfer from carboxy-S-adenosyl-L-methionine (Cx-SAM) to 5-hydroxyuridine (ho5U) to form 5-carboxymethoxyuridine (cmo5U) at position 34 in tRNAs. The chain is tRNA U34 carboxymethyltransferase from Campylobacter jejuni subsp. doylei (strain ATCC BAA-1458 / RM4099 / 269.97).